Here is a 144-residue protein sequence, read N- to C-terminus: Single-stranded DNA-binding protein 3 (144 aa).

Residues 1 to 103 (MNKVVLIGRL…IVAEEVQFLE (103 aa)) form the SSB domain. Residues 112-134 (MANDQFNNGNENGSMQLPDNNDI) show a composition bias toward polar residues. The segment at 112–144 (MANDQFNNGNENGSMQLPDNNDITPIDDGDIPF) is disordered.

Homotetramer.

This chain is Single-stranded DNA-binding protein 3 (ssb3), found in Clostridium acetobutylicum (strain ATCC 824 / DSM 792 / JCM 1419 / IAM 19013 / LMG 5710 / NBRC 13948 / NRRL B-527 / VKM B-1787 / 2291 / W).